The sequence spans 554 residues: Membrane protein insertase YidC (554 aa).

Transmembrane regions (helical) follow at residues valine 7–glutamine 24, valine 362–phenylalanine 382, leucine 436–valine 456, proline 475–proline 495, and proline 510–valine 530.

This sequence belongs to the OXA1/ALB3/YidC family. Type 1 subfamily. As to quaternary structure, interacts with the Sec translocase complex via SecD. Specifically interacts with transmembrane segments of nascent integral membrane proteins during membrane integration.

It is found in the cell inner membrane. In terms of biological role, required for the insertion and/or proper folding and/or complex formation of integral membrane proteins into the membrane. Involved in integration of membrane proteins that insert both dependently and independently of the Sec translocase complex, as well as at least some lipoproteins. Aids folding of multispanning membrane proteins. The polypeptide is Membrane protein insertase YidC (Burkholderia vietnamiensis (strain G4 / LMG 22486) (Burkholderia cepacia (strain R1808))).